A 386-amino-acid chain; its full sequence is uncharacterized protein (386 aa).

The disordered stretch occupies residues 355–386; the sequence is PSEAQKVQVKSNKKPPIAPKPEHLKKRDHGLC. Basic residues predominate over residues 377–386; the sequence is HLKKRDHGLC.

This is an uncharacterized protein from Rickettsia prowazekii (strain Madrid E).